We begin with the raw amino-acid sequence, 263 residues long: Peptide methionine sulfoxide reductase A4, chloroplastic (263 aa).

A chloroplast-targeting transit peptide spans 1–75; it reads MPPLLASTSS…GLGGLGGSPR (75 aa).

The protein belongs to the MsrA Met sulfoxide reductase family. As to expression, expressed in roots, stems, leaves and flowers.

The protein localises to the plastid. The protein resides in the chloroplast. It carries out the reaction L-methionyl-[protein] + [thioredoxin]-disulfide + H2O = L-methionyl-(S)-S-oxide-[protein] + [thioredoxin]-dithiol. It catalyses the reaction [thioredoxin]-disulfide + L-methionine + H2O = L-methionine (S)-S-oxide + [thioredoxin]-dithiol. In terms of biological role, catalyzes the reduction of methionine sulfoxide (MetSO) to methionine in proteins. Involved in abiotic and salt stress responses. Plays a protective role against oxidative stress by restoring activity to proteins that have been inactivated by methionine oxidation. MSRA family specifically reduces the MetSO S-enantiomer. This Oryza sativa subsp. japonica (Rice) protein is Peptide methionine sulfoxide reductase A4, chloroplastic.